Here is a 119-residue protein sequence, read N- to C-terminus: Large ribosomal subunit protein uL18 (119 aa).

This sequence belongs to the universal ribosomal protein uL18 family. As to quaternary structure, part of the 50S ribosomal subunit; part of the 5S rRNA/L5/L18/L25 subcomplex. Contacts the 5S and 23S rRNAs.

In terms of biological role, this is one of the proteins that bind and probably mediate the attachment of the 5S RNA into the large ribosomal subunit, where it forms part of the central protuberance. This is Large ribosomal subunit protein uL18 from Endomicrobium trichonymphae.